A 443-amino-acid polypeptide reads, in one-letter code: Pyrrolysine--tRNA ligase (443 aa).

The disordered stretch occupies residues 103-177; the sequence is VRKAMPKSVA…PAAPVPTSAP (75 aa). The span at 131-177 shows a compositional bias: low complexity; the sequence is PAPATPVSAPAQAPAPSTGSASATSASAQRMANSAAAPAAPVPTSAP.

Belongs to the class-II aminoacyl-tRNA synthetase family.

Its subcellular location is the cytoplasm. The catalysed reaction is tRNA(Pyl) + L-pyrrolysine + ATP = L-pyrrolysyl-tRNA(Pyl) + AMP + diphosphate. Its function is as follows. Catalyzes the attachment of pyrrolysine to tRNA(Pyl). Pyrrolysine is a lysine derivative encoded by the termination codon UAG. The sequence is that of Pyrrolysine--tRNA ligase from Methanosarcina acetivorans (strain ATCC 35395 / DSM 2834 / JCM 12185 / C2A).